A 334-amino-acid chain; its full sequence is MTTVYYDQSVTKDALQGKKVAIIGYGSQGHAHAQNLKDNGYDVIIGIRPGCSFDKAKDDGFEVYPVDEAAKQADVIMVLLPDEIQGQVYKEEIEPNLEANNALVFAHGFNIHFGVIQPPENVDVFLVAPKGPGHLVRRTFAEGSAVPALFAVEQDPSGEARDLALSYAKGIGATRAGVLETSFKEETETDLFGEQAVLCGGTTKLVQSGFETLVEAGYQPEIAYFEVLHEMKLIVDLMYEGGMENMRYSISNTAEFGDYVSGPRIITPDVKDNMKAVLDDIQKGNFSDRFIKDNQNNFEEFHKLREEQHGHQIEAVGRELRDMMPFIKSKSIEK.

A KARI N-terminal Rossmann domain is found at 1–181 (MTTVYYDQSV…GATRAGVLET (181 aa)). NADP(+) contacts are provided by residues 25–28 (YGSQ), arginine 48, serine 52, and 82–85 (DEIQ). Residue histidine 107 is part of the active site. Glycine 133 contacts NADP(+). Residues 182-327 (SFKEETETDL…RELRDMMPFI (146 aa)) enclose the KARI C-terminal knotted domain. Residues aspartate 190, glutamate 194, glutamate 226, and glutamate 230 each coordinate Mg(2+). Substrate is bound at residue serine 251.

The protein belongs to the ketol-acid reductoisomerase family. Mg(2+) serves as cofactor.

It catalyses the reaction (2R)-2,3-dihydroxy-3-methylbutanoate + NADP(+) = (2S)-2-acetolactate + NADPH + H(+). The catalysed reaction is (2R,3R)-2,3-dihydroxy-3-methylpentanoate + NADP(+) = (S)-2-ethyl-2-hydroxy-3-oxobutanoate + NADPH + H(+). Its pathway is amino-acid biosynthesis; L-isoleucine biosynthesis; L-isoleucine from 2-oxobutanoate: step 2/4. It participates in amino-acid biosynthesis; L-valine biosynthesis; L-valine from pyruvate: step 2/4. Its function is as follows. Involved in the biosynthesis of branched-chain amino acids (BCAA). Catalyzes an alkyl-migration followed by a ketol-acid reduction of (S)-2-acetolactate (S2AL) to yield (R)-2,3-dihydroxy-isovalerate. In the isomerase reaction, S2AL is rearranged via a Mg-dependent methyl migration to produce 3-hydroxy-3-methyl-2-ketobutyrate (HMKB). In the reductase reaction, this 2-ketoacid undergoes a metal-dependent reduction by NADPH to yield (R)-2,3-dihydroxy-isovalerate. This Staphylococcus saprophyticus subsp. saprophyticus (strain ATCC 15305 / DSM 20229 / NCIMB 8711 / NCTC 7292 / S-41) protein is Ketol-acid reductoisomerase (NADP(+)).